Reading from the N-terminus, the 629-residue chain is Phosphatidylinositol-3,5-bisphosphate 3-phosphatase MTMR8 (629 aa).

Residues 126-500 (GWKLIDLKVD…FSFQFWCGMY (375 aa)) form the Myotubularin phosphatase domain. Asn-250, Asn-275, and Ile-276 together coordinate a 1,2-diacyl-sn-glycero-3-phospho-(1D-myo-inositol-3,5-bisphosphate). The a 1,2-diacyl-sn-glycero-3-phospho-(1D-myo-inositol-3-phosphate) site is built by Asn-250, Asn-275, and Ile-276. The active-site Phosphocysteine intermediate is Cys-338. Positions 339, 340, 341, 342, 343, 344, 380, and 384 each coordinate a 1,2-diacyl-sn-glycero-3-phospho-(1D-myo-inositol-3,5-bisphosphate). Residues Ser-339, Asp-340, Gly-341, Trp-342, Asp-343, and Arg-344 each coordinate a 1,2-diacyl-sn-glycero-3-phospho-(1D-myo-inositol-3-phosphate). Phosphate contacts are provided by Ser-339 and Asp-340. Phosphate contacts are provided by Trp-342, Asp-343, and Arg-344. Residue Arg-384 coordinates a 1,2-diacyl-sn-glycero-3-phospho-(1D-myo-inositol-3-phosphate). The stretch at 517-543 (LLSCMNQKIKLEDNASELENKLPFLDG) forms a coiled coil.

It belongs to the protein-tyrosine phosphatase family. Non-receptor class myotubularin subfamily. As to quaternary structure, homodimer.

Its subcellular location is the nucleus envelope. The enzyme catalyses a 1,2-diacyl-sn-glycero-3-phospho-(1D-myo-inositol-3,5-bisphosphate) + H2O = a 1,2-diacyl-sn-glycero-3-phospho-(1D-myo-inositol-5-phosphate) + phosphate. It catalyses the reaction a 1,2-diacyl-sn-glycero-3-phospho-(1D-myo-inositol-3-phosphate) + H2O = a 1,2-diacyl-sn-glycero-3-phospho-(1D-myo-inositol) + phosphate. The catalysed reaction is 1,2-dioctanoyl-sn-glycero-3-phospho-(1D-myo-inositol-3,5-bisphosphate) + H2O = 1,2-dioctanoyl-sn-glycero-3-phospho-(1D-myo-inositol-5-phosphate) + phosphate. Functionally, lipid phosphatase that specifically dephosphorylates the D-3 position of phosphatidylinositol 3-phosphate and phosphatidylinositol 3,5-bisphosphate, generating phosphatidylinositol and phosphatidylinositol 5-phosphate. The protein is Phosphatidylinositol-3,5-bisphosphate 3-phosphatase MTMR8 of Gallus gallus (Chicken).